Here is a 94-residue protein sequence, read N- to C-terminus: Large ribosomal subunit protein uL23 (94 aa).

The protein belongs to the universal ribosomal protein uL23 family. Part of the 50S ribosomal subunit. Contacts protein L29, and trigger factor when it is bound to the ribosome.

One of the early assembly proteins it binds 23S rRNA. One of the proteins that surrounds the polypeptide exit tunnel on the outside of the ribosome. Forms the main docking site for trigger factor binding to the ribosome. This is Large ribosomal subunit protein uL23 from Geobacter sulfurreducens (strain ATCC 51573 / DSM 12127 / PCA).